A 351-amino-acid polypeptide reads, in one-letter code: UPF0104 membrane protein MTH_887 (351 aa).

A run of 8 helical transmembrane segments spans residues 20 to 40, 51 to 71, 137 to 157, 165 to 185, 244 to 264, 275 to 295, 304 to 324, and 328 to 348; these read IVLS…FAGF, SPYF…LWTL, VFEF…IMTW, IVVS…VYAG, FVIG…RLYV, AVPL…PILP, ILVG…AASV, and IASY…YGKQ.

The protein belongs to the UPF0104 family.

The protein resides in the cell membrane. This chain is UPF0104 membrane protein MTH_887, found in Methanothermobacter thermautotrophicus (strain ATCC 29096 / DSM 1053 / JCM 10044 / NBRC 100330 / Delta H) (Methanobacterium thermoautotrophicum).